The chain runs to 307 residues: ATP synthase gamma chain (307 aa).

This sequence belongs to the ATPase gamma chain family. As to quaternary structure, F-type ATPases have 2 components, CF(1) - the catalytic core - and CF(0) - the membrane proton channel. CF(1) has five subunits: alpha(3), beta(3), gamma(1), delta(1), epsilon(1). CF(0) has three main subunits: a, b and c.

The protein resides in the cell membrane. In terms of biological role, produces ATP from ADP in the presence of a proton gradient across the membrane. The gamma chain is believed to be important in regulating ATPase activity and the flow of protons through the CF(0) complex. This chain is ATP synthase gamma chain, found in Bifidobacterium longum subsp. infantis (strain ATCC 15697 / DSM 20088 / JCM 1222 / NCTC 11817 / S12).